A 219-amino-acid chain; its full sequence is MNLSLHEARIIGCLLEKEVTTPDQYPLSLNSLTLACNQKSSRDPVMSMTESETQSAIDSLMKKRLVTDQTGFGSRVTKYKHRFCNTEFSDLQFSPAQFALICLLLLRGPQTPGELKSRSGRLHQFADLNEVENALLALAQREPSLVHQLPKEPGRRDSRFEELISDQVKGESVPISEHSRSQREAPSKRQDEMDELTLRVSQLELEVKTLKEALQDLLD.

The disordered stretch occupies residues Gln-167–Glu-195. A compositionally biased stretch (basic and acidic residues) spans Glu-177–Asp-191.

It belongs to the UPF0502 family.

The protein is UPF0502 protein Swoo_2055 of Shewanella woodyi (strain ATCC 51908 / MS32).